The following is a 586-amino-acid chain: Pyruvate kinase (586 aa).

Arg-32 contacts substrate. 4 residues coordinate K(+): Asn-34, Ser-36, Asp-66, and Thr-67. ATP is bound at residue 34 to 37 (NFSH). ATP-binding residues include Arg-73 and Lys-156. Mg(2+) is bound at residue Glu-222. 3 residues coordinate substrate: Gly-245, Asp-246, and Thr-278. Residue Asp-246 coordinates Mg(2+).

It belongs to the pyruvate kinase family. The protein in the C-terminal section; belongs to the PEP-utilizing enzyme family. Mg(2+) is required as a cofactor. Requires K(+) as cofactor.

It carries out the reaction pyruvate + ATP = phosphoenolpyruvate + ADP + H(+). It functions in the pathway carbohydrate degradation; glycolysis; pyruvate from D-glyceraldehyde 3-phosphate: step 5/5. The protein is Pyruvate kinase (pyk) of Staphylococcus haemolyticus (strain JCSC1435).